A 94-amino-acid polypeptide reads, in one-letter code: Venom protein 59.1 (94 aa).

An N-terminal signal peptide occupies residues 1 to 22 (MNSREMFCVFILFASFFYCSYA). 6 disulfides stabilise this stretch: Cys19-Cys47, Cys26-Cys49, Cys32-Cys50, Cys38-Cys53, Cys61-Cys76, and Cys70-Cys91. The IGFBP N-terminal domain occupies 23 to 94 (EQECNCDKSC…GEALEICLRA (72 aa)).

Expressed by the venom gland.

The protein resides in the secreted. The polypeptide is Venom protein 59.1 (Lychas mucronatus (Chinese swimming scorpion)).